The primary structure comprises 213 residues: 2-C-methyl-D-erythritol 4-phosphate cytidylyltransferase (213 aa).

It belongs to the IspD/TarI cytidylyltransferase family. IspD subfamily.

The enzyme catalyses 2-C-methyl-D-erythritol 4-phosphate + CTP + H(+) = 4-CDP-2-C-methyl-D-erythritol + diphosphate. The protein operates within isoprenoid biosynthesis; isopentenyl diphosphate biosynthesis via DXP pathway; isopentenyl diphosphate from 1-deoxy-D-xylulose 5-phosphate: step 2/6. Catalyzes the formation of 4-diphosphocytidyl-2-C-methyl-D-erythritol from CTP and 2-C-methyl-D-erythritol 4-phosphate (MEP). The polypeptide is 2-C-methyl-D-erythritol 4-phosphate cytidylyltransferase (Thermus thermophilus (strain ATCC BAA-163 / DSM 7039 / HB27)).